The following is a 448-amino-acid chain: UDP-N-acetylglucosamine--dolichyl-phosphate N-acetylglucosaminephosphotransferase (448 aa).

Residues 24–44 traverse the membrane as a helical segment; sequence ALVAAVGFGIAGYLATDMLIP. Residues 58 to 60 and Glu-70 each bind UDP-N-acetyl-alpha-D-glucosamine; that span reads KDL. 2 consecutive transmembrane segments (helical) span residues 72–92 and 129–149; these read IGAI…PFIF and YLSA…DDLF. Lys-156 lines the dolichyl phosphate pocket. The next 2 membrane-spanning stretches (helical) occupy residues 157 to 177 and 202 to 222; these read FFLP…DFGV and YVYM…LAGV. 210–218 serves as a coordination point for dolichyl phosphate; it reads IFCPNSINI. Residue Asn-217 participates in Mg(2+) binding. Asn-223 provides a ligand contact to UDP-N-acetyl-alpha-D-glucosamine. A run of 4 helical transmembrane segments spans residues 231–251, 256–276, 283–303, and 309–329; these read IVLA…GPLA, HRFS…LWKW, VFVG…VGIL, and TMLL…PQLF. Asp-287 is a Mg(2+) binding site. 336–338 contributes to the UDP-N-acetyl-alpha-D-glucosamine binding site; that stretch reads RHR. 2 helical membrane-spanning segments follow: residues 387-407 and 419-439; these read EIIS…FGPM and LQFC…AIIF.

Belongs to the glycosyltransferase 4 family. Mg(2+) serves as cofactor.

It is found in the endoplasmic reticulum membrane. The enzyme catalyses a di-trans,poly-cis-dolichyl phosphate + UDP-N-acetyl-alpha-D-glucosamine = an N-acetyl-alpha-D-glucosaminyl-diphospho-di-trans,poly-cis-dolichol + UMP. The protein operates within protein modification; protein glycosylation. Inhibited by natural nucleoside antibiotic tunicamycin, which acts as a structural analog and competitor of UDP-GlcNAc. In terms of biological role, UDP-N-acetylglucosamine--dolichyl-phosphate N-acetylglucosaminephosphotransferase that operates in the biosynthetic pathway of dolichol-linked oligosaccharides, the glycan precursors employed in protein asparagine (N)-glycosylation. The assembly of dolichol-linked oligosaccharides begins on the cytosolic side of the endoplasmic reticulum membrane and finishes in its lumen. The sequential addition of sugars to dolichol pyrophosphate produces dolichol-linked oligosaccharides containing fourteen sugars, including two GlcNAcs, nine mannoses and three glucoses. Once assembled, the oligosaccharide is transferred from the lipid to nascent proteins by oligosaccharyltransferases. Catalyzes the initial step of dolichol-linked oligosaccharide biosynthesis, transfering GlcNAc-1-P from cytosolic UDP-GlcNAc onto the carrier lipid dolichyl phosphate (P-dolichol), yielding GlcNAc-P-P-dolichol embedded in the cytoplasmic leaflet of the endoplasmic reticulum membrane. The sequence is that of UDP-N-acetylglucosamine--dolichyl-phosphate N-acetylglucosaminephosphotransferase (ALG7) from Saccharomyces cerevisiae (strain ATCC 204508 / S288c) (Baker's yeast).